The following is a 338-amino-acid chain: RNA 3'-terminal phosphate cyclase (338 aa).

ATP contacts are provided by residues Q103 and Y283 to Q287. H308 serves as the catalytic Tele-AMP-histidine intermediate.

The protein belongs to the RNA 3'-terminal cyclase family. Type 1 subfamily.

The protein localises to the cytoplasm. The enzyme catalyses a 3'-end 3'-phospho-ribonucleotide-RNA + ATP = a 3'-end 2',3'-cyclophospho-ribonucleotide-RNA + AMP + diphosphate. Functionally, catalyzes the conversion of 3'-phosphate to a 2',3'-cyclic phosphodiester at the end of RNA. The mechanism of action of the enzyme occurs in 3 steps: (A) adenylation of the enzyme by ATP; (B) transfer of adenylate to an RNA-N3'P to produce RNA-N3'PP5'A; (C) and attack of the adjacent 2'-hydroxyl on the 3'-phosphorus in the diester linkage to produce the cyclic end product. The biological role of this enzyme is unknown but it is likely to function in some aspects of cellular RNA processing. The chain is RNA 3'-terminal phosphate cyclase from Escherichia coli O9:H4 (strain HS).